The following is a 174-amino-acid chain: DNA endonuclease I-HmuI (174 aa).

This Bacillus subtilis (Bacteriophage SP01) protein is DNA endonuclease I-HmuI.